The chain runs to 479 residues: ATP synthase subunit beta (479 aa).

153 to 160 (GGAGVGKT) lines the ATP pocket.

Belongs to the ATPase alpha/beta chains family. In terms of assembly, F-type ATPases have 2 components, CF(1) - the catalytic core - and CF(0) - the membrane proton channel. CF(1) has five subunits: alpha(3), beta(3), gamma(1), delta(1), epsilon(1). CF(0) has three main subunits: a(1), b(2) and c(9-12). The alpha and beta chains form an alternating ring which encloses part of the gamma chain. CF(1) is attached to CF(0) by a central stalk formed by the gamma and epsilon chains, while a peripheral stalk is formed by the delta and b chains.

Its subcellular location is the cell membrane. It catalyses the reaction ATP + H2O + 4 H(+)(in) = ADP + phosphate + 5 H(+)(out). Functionally, produces ATP from ADP in the presence of a proton gradient across the membrane. The catalytic sites are hosted primarily by the beta subunits. The polypeptide is ATP synthase subunit beta (Lactobacillus delbrueckii subsp. bulgaricus (strain ATCC BAA-365 / Lb-18)).